Here is a 470-residue protein sequence, read N- to C-terminus: 6-phospho-beta-galactosidase (470 aa).

5 residues coordinate D-galactose 6-phosphate: glutamine 19, histidine 116, asparagine 159, glutamate 160, and asparagine 297. Glutamate 160 (proton donor) is an active-site residue. Glutamate 375 serves as the catalytic Nucleophile. D-galactose 6-phosphate contacts are provided by serine 430, tryptophan 431, lysine 437, and tyrosine 439.

Belongs to the glycosyl hydrolase 1 family.

The catalysed reaction is a 6-phospho-beta-D-galactoside + H2O = D-galactose 6-phosphate + an alcohol. It participates in carbohydrate metabolism; lactose degradation; D-galactose 6-phosphate and beta-D-glucose from lactose 6-phosphate: step 1/1. This is 6-phospho-beta-galactosidase from Staphylococcus aureus (strain COL).